We begin with the raw amino-acid sequence, 421 residues long: UDP-N-acetylglucosamine 1-carboxyvinyltransferase (421 aa).

A phosphoenolpyruvate-binding site is contributed by 22–23 (KN). UDP-N-acetyl-alpha-D-glucosamine is bound at residue arginine 93. The active-site Proton donor is the cysteine 117. 2-(S-cysteinyl)pyruvic acid O-phosphothioketal is present on cysteine 117. UDP-N-acetyl-alpha-D-glucosamine contacts are provided by residues 122–126 (RPVDL), aspartate 308, and isoleucine 330.

Belongs to the EPSP synthase family. MurA subfamily.

Its subcellular location is the cytoplasm. The catalysed reaction is phosphoenolpyruvate + UDP-N-acetyl-alpha-D-glucosamine = UDP-N-acetyl-3-O-(1-carboxyvinyl)-alpha-D-glucosamine + phosphate. It participates in cell wall biogenesis; peptidoglycan biosynthesis. Its function is as follows. Cell wall formation. Adds enolpyruvyl to UDP-N-acetylglucosamine. This is UDP-N-acetylglucosamine 1-carboxyvinyltransferase from Pseudomonas fluorescens (strain Pf0-1).